Reading from the N-terminus, the 319-residue chain is 4-hydroxy-3-methylbut-2-enyl diphosphate reductase (319 aa).

Residue cysteine 17 participates in [4Fe-4S] cluster binding. The (2E)-4-hydroxy-3-methylbut-2-enyl diphosphate site is built by histidine 46 and histidine 79. 2 residues coordinate dimethylallyl diphosphate: histidine 46 and histidine 79. Histidine 46 and histidine 79 together coordinate isopentenyl diphosphate. Position 101 (cysteine 101) interacts with [4Fe-4S] cluster. Residue histidine 129 coordinates (2E)-4-hydroxy-3-methylbut-2-enyl diphosphate. Histidine 129 provides a ligand contact to dimethylallyl diphosphate. An isopentenyl diphosphate-binding site is contributed by histidine 129. Glutamate 131 (proton donor) is an active-site residue. Threonine 170 contacts (2E)-4-hydroxy-3-methylbut-2-enyl diphosphate. Cysteine 200 serves as a coordination point for [4Fe-4S] cluster. (2E)-4-hydroxy-3-methylbut-2-enyl diphosphate contacts are provided by serine 228, serine 229, asparagine 230, and serine 273. Residues serine 228, serine 229, asparagine 230, and serine 273 each coordinate dimethylallyl diphosphate. Positions 228, 229, 230, and 273 each coordinate isopentenyl diphosphate.

This sequence belongs to the IspH family. It depends on [4Fe-4S] cluster as a cofactor.

The catalysed reaction is isopentenyl diphosphate + 2 oxidized [2Fe-2S]-[ferredoxin] + H2O = (2E)-4-hydroxy-3-methylbut-2-enyl diphosphate + 2 reduced [2Fe-2S]-[ferredoxin] + 2 H(+). The enzyme catalyses dimethylallyl diphosphate + 2 oxidized [2Fe-2S]-[ferredoxin] + H2O = (2E)-4-hydroxy-3-methylbut-2-enyl diphosphate + 2 reduced [2Fe-2S]-[ferredoxin] + 2 H(+). The protein operates within isoprenoid biosynthesis; dimethylallyl diphosphate biosynthesis; dimethylallyl diphosphate from (2E)-4-hydroxy-3-methylbutenyl diphosphate: step 1/1. It functions in the pathway isoprenoid biosynthesis; isopentenyl diphosphate biosynthesis via DXP pathway; isopentenyl diphosphate from 1-deoxy-D-xylulose 5-phosphate: step 6/6. Functionally, catalyzes the conversion of 1-hydroxy-2-methyl-2-(E)-butenyl 4-diphosphate (HMBPP) into a mixture of isopentenyl diphosphate (IPP) and dimethylallyl diphosphate (DMAPP). Acts in the terminal step of the DOXP/MEP pathway for isoprenoid precursor biosynthesis. The protein is 4-hydroxy-3-methylbut-2-enyl diphosphate reductase of Cereibacter sphaeroides (strain ATCC 17029 / ATH 2.4.9) (Rhodobacter sphaeroides).